Consider the following 946-residue polypeptide: Inositol-trisphosphate 3-kinase B (946 aa).

5 disordered regions span residues Glu19 to Lys128, Ala156 to Cys288, Ala308 to Ser472, Lys486 to Cys561, and Gly580 to Asp638. Residues Ser43, Ser49, and Ser71 each carry the phosphoserine modification. Residues Asn83 to Arg105 are compositionally biased toward low complexity. Phosphoserine occurs at positions 204 and 269. The span at Thr396 to Trp411 shows a compositional bias: polar residues. Low complexity predominate over residues Gly445–Ser458. Residues Thr524–Ser534 show a composition bias toward polar residues. Low complexity predominate over residues Ser599–Tyr612. ATP is bound by residues Ser679, Lys690, Asp730–Leu732, and Asp743. Substrate-binding residues include Lys745 and Arg766. A calmodulin-binding region spans residues Asp768–Val776. Lys793 to Arg800 lines the substrate pocket. ATP contacts are provided by Lys817 and Asp897. Lys900 provides a ligand contact to substrate.

Belongs to the inositol phosphokinase (IPK) family. As to quaternary structure, interacts with DMTN.

The protein localises to the cytoplasm. It localises to the cytoskeleton. Its subcellular location is the endoplasmic reticulum. It catalyses the reaction 1D-myo-inositol 1,4,5-trisphosphate + ATP = 1D-myo-inositol 1,3,4,5-tetrakisphosphate + ADP + H(+). IP3K is activated by calcium and calmodulin. Form B is much more sensitive to calcium/calmodulin than form A. Catalyzes the phosphorylation of 1D-myo-inositol 1,4,5-trisphosphate (InsP3) into 1D-myo-inositol 1,3,4,5-tetrakisphosphate and participates to the regulation of calcium homeostasis. The sequence is that of Inositol-trisphosphate 3-kinase B from Homo sapiens (Human).